The sequence spans 474 residues: B-cell CLL/lymphoma 6 member B protein (474 aa).

Residues 38-105 (TDVTLLVGGQ…MYTSRLRLSP (68 aa)) form the BTB domain. Disordered regions lie at residues 144–190 (PVEV…PDPK) and 210–249 (GSLVGESSGQPCPQARLPSGDEACSSSSSSEEGTTPGLQS). Residues 150 to 160 (PRPPTVAPPGS) are compositionally biased toward pro residues. Residues 162–172 (RRSEGHPDPPT) are compositionally biased toward basic and acidic residues. Composition is skewed to polar residues over residues 173–183 (ESRSCSQGSPS), 210–220 (GSLVGESSGQP), and 240–249 (EEGTTPGLQS). 5 consecutive C2H2-type zinc fingers follow at residues 323-345 (YKCQLCRSAFRYKGNLASHRTVH), 351-373 (YRCSICGARFNRPANLKTHSRIH), 379-401 (YKCETCGSRFVQVAHLRAHVLIH), 407-429 (YPCPTCGTRFRHLQTLKSHVRIH), and 435-458 (YHCDPCGLHFRHKSQLRLHLRQKH).

As to quaternary structure, associates with BCL6 through the BTB domain. In terms of tissue distribution, ubiquitously expressed with higher expression found in heart and lung.

It localises to the nucleus. Acts as a sequence-specific transcriptional repressor in association with BCL6. Necessary for activation of naive T-cells to antigenic stimulation. May attenuate the regulatory effect of BCL6 on antigenic activation of naive CD4 T-cells by forming a heterodimer with BCL6. This is B-cell CLL/lymphoma 6 member B protein (Bcl6b) from Mus musculus (Mouse).